A 612-amino-acid chain; its full sequence is 1,8-cineole synthase, chloroplastic (612 aa).

A chloroplast-targeting transit peptide spans 1–52 (MALVCGAPLASRSCLNKSLISSTHELKPLRRTILPTLRWKSATPSINMCLTT). Positions 363, 367, and 515 each coordinate Mg(2+). Positions 363–367 (DDIYD) match the DDXXD motif motif.

The protein belongs to the terpene synthase family. Tpsd subfamily. It depends on Mg(2+) as a cofactor. Requires Mn(2+) as cofactor.

Its subcellular location is the plastid. The protein localises to the chloroplast. The enzyme catalyses (2E)-geranyl diphosphate + H2O = 1,8-cineole + diphosphate. Its pathway is terpene metabolism; oleoresin biosynthesis. Functionally, terpene synthase (TPS) involved in the biosynthesis of monoterpene natural products included in conifer oleoresin secretions and volatile emissions; these compounds contribute to biotic and abiotic stress defense against herbivores and pathogens. Catalyzes the conversion of (2E)-geranyl diphosphate (GPP) to 1,8-cineole. This Picea glauca (White spruce) protein is 1,8-cineole synthase, chloroplastic.